Reading from the N-terminus, the 382-residue chain is Heme A synthase (382 aa).

The next 8 helical transmembrane spans lie at 25 to 45, 112 to 132, 141 to 161, 176 to 196, 211 to 231, 270 to 290, 303 to 323, and 327 to 347; these read GAVR…VAVG, LLGR…WARG, GLLG…IMVA, LALH…LAAG, VVAC…GLVA, LALV…VAIA, AAAG…GLGI, and LLHV…AVLI. H277 provides a ligand contact to heme. H338 lines the heme pocket.

The protein belongs to the COX15/CtaA family. Type 2 subfamily. As to quaternary structure, interacts with CtaB. Heme b is required as a cofactor.

The protein localises to the cell membrane. The enzyme catalyses Fe(II)-heme o + 2 A + H2O = Fe(II)-heme a + 2 AH2. Its pathway is porphyrin-containing compound metabolism; heme A biosynthesis; heme A from heme O: step 1/1. In terms of biological role, catalyzes the conversion of heme O to heme A by two successive hydroxylations of the methyl group at C8. The first hydroxylation forms heme I, the second hydroxylation results in an unstable dihydroxymethyl group, which spontaneously dehydrates, resulting in the formyl group of heme A. The chain is Heme A synthase from Methylorubrum extorquens (strain CM4 / NCIMB 13688) (Methylobacterium extorquens).